A 150-amino-acid chain; its full sequence is MKIWVDADACPGVIKDILFRAAERAEIAVTLVANHAMRIPPSRFIQLVTVSSGFDVADNEIVRRAAPGDLVITADIPLASEVIDKGALALNPRGELYTEHNIKSILNMRDFMDTMRASGVQTGGPAAIGQSEKQAFGNQLDRLITKYHKR.

The protein belongs to the UPF0178 family.

The protein is UPF0178 protein Shew_2726 of Shewanella loihica (strain ATCC BAA-1088 / PV-4).